Reading from the N-terminus, the 186-residue chain is Probable chorismate pyruvate-lyase (186 aa).

Substrate is bound by residues R80, L118, and E170.

Belongs to the UbiC family.

The protein resides in the cytoplasm. It catalyses the reaction chorismate = 4-hydroxybenzoate + pyruvate. Its pathway is cofactor biosynthesis; ubiquinone biosynthesis. Functionally, removes the pyruvyl group from chorismate, with concomitant aromatization of the ring, to provide 4-hydroxybenzoate (4HB) for the ubiquinone pathway. The polypeptide is Probable chorismate pyruvate-lyase (Pseudomonas syringae pv. syringae (strain B728a)).